The chain runs to 153 residues: Heavy metal-associated isoprenylated plant protein 25 (153 aa).

An HMA domain is found at 24 to 88 (LQTVDVRVLI…IIHRTGKRAE (65 aa)). Positions 35 and 38 each coordinate a metal cation. Cys150 bears the Cysteine methyl ester mark. Cys150 carries the S-farnesyl cysteine lipid modification. The propeptide at 151–153 (VVM) is removed in mature form.

The protein belongs to the HIPP family. In terms of tissue distribution, expressed in roots, shoot apical meristem, trichomes and flower buds.

It localises to the membrane. Functionally, heavy-metal-binding protein. Binds cadmium. May be involved in cadmium transport and play a role in cadmium detoxification. In Arabidopsis thaliana (Mouse-ear cress), this protein is Heavy metal-associated isoprenylated plant protein 25.